A 402-amino-acid chain; its full sequence is Secondary metabolism regulator laeA (402 aa).

Residues 1–70 (MSLKYYLNDL…MSPTEVCSTD (70 aa)) form a disordered region. A compositionally biased stretch (acidic residues) spans 11–21 (SDSDSESESEC).

Belongs to the methyltransferase superfamily. LaeA methyltransferase family.

The protein resides in the nucleus. The enzyme catalyses L-methionyl-[protein] + S-adenosyl-L-methionine = S-methyl-L-methionyl-[protein] + S-adenosyl-L-homocysteine. Its function is as follows. Methyltransferase that performs automethylation. No other methyl-accepting substrate has been identified yet. Acts as a global regulator for secondary metabolite gene expression. Negatively regulates the production of coprinoferrin, a structurally novel acylated tripeptide hydroxamate siderophore. This Coprinopsis cinerea (strain Okayama-7 / 130 / ATCC MYA-4618 / FGSC 9003) (Inky cap fungus) protein is Secondary metabolism regulator laeA.